A 142-amino-acid polypeptide reads, in one-letter code: Large ribosomal subunit protein uL11 (142 aa).

Part of the ribosomal stalk of the 50S ribosomal subunit. Interacts with L10 and the large rRNA to form the base of the stalk. L10 forms an elongated spine to which L12 dimers bind in a sequential fashion forming a multimeric L10(L12)X complex. Post-translationally, lys-40 is trimethylated or acetylated; other modifications may also exist.

Forms part of the ribosomal stalk which helps the ribosome interact with GTP-bound translation factors. This chain is Large ribosomal subunit protein uL11, found in Rhodopseudomonas palustris (strain ATCC BAA-98 / CGA009).